Reading from the N-terminus, the 371-residue chain is uncharacterized protein (371 aa).

To A.pernix APE_1804 and S.solfataricus SSO2105.

This is an uncharacterized protein from Aeropyrum pernix (strain ATCC 700893 / DSM 11879 / JCM 9820 / NBRC 100138 / K1).